A 258-amino-acid chain; its full sequence is Type III pantothenate kinase (258 aa).

12 to 19 contacts ATP; that stretch reads DIGNTSIA. Residues Tyr94 and 109–112 contribute to the substrate site; that span reads GSDV. The Proton acceptor role is filled by Asp111. Asp132 is a K(+) binding site. Thr135 is a binding site for ATP. Thr187 is a binding site for substrate.

It belongs to the type III pantothenate kinase family. In terms of assembly, homodimer. NH4(+) serves as cofactor. K(+) is required as a cofactor.

The protein resides in the cytoplasm. It catalyses the reaction (R)-pantothenate + ATP = (R)-4'-phosphopantothenate + ADP + H(+). It participates in cofactor biosynthesis; coenzyme A biosynthesis; CoA from (R)-pantothenate: step 1/5. Catalyzes the phosphorylation of pantothenate (Pan), the first step in CoA biosynthesis. The protein is Type III pantothenate kinase of Borreliella afzelii (strain PKo) (Borrelia afzelii).